A 194-amino-acid polypeptide reads, in one-letter code: Adenylate kinase (194 aa).

10–15 (GAGKGT) provides a ligand contact to ATP. The tract at residues 30-59 (STGDMLRAAVAAGTPVGLKAKAVMESGGLV) is NMP. AMP contacts are provided by residues Thr-31, Arg-36, 57 to 59 (GLV), 85 to 88 (GFPR), and Gln-92. The tract at residues 126–142 (NRAAEAKAKGEPVRKDD) is LID. Arg-127 contacts ATP. The AMP site is built by Arg-139 and Arg-150. Ala-178 contributes to the ATP binding site.

The protein belongs to the adenylate kinase family. As to quaternary structure, monomer.

It localises to the cytoplasm. The catalysed reaction is AMP + ATP = 2 ADP. It participates in purine metabolism; AMP biosynthesis via salvage pathway; AMP from ADP: step 1/1. Its function is as follows. Catalyzes the reversible transfer of the terminal phosphate group between ATP and AMP. Plays an important role in cellular energy homeostasis and in adenine nucleotide metabolism. This chain is Adenylate kinase, found in Azorhizobium caulinodans (strain ATCC 43989 / DSM 5975 / JCM 20966 / LMG 6465 / NBRC 14845 / NCIMB 13405 / ORS 571).